Here is a 478-residue protein sequence, read N- to C-terminus: Elongation factor Tu, chloroplastic (478 aa).

Residues 1-29 (MASISAATATSSTKLVSSNSTNPLLPSST) show a composition bias toward low complexity. The interval 1-31 (MASISAATATSSTKLVSSNSTNPLLPSSTKP) is disordered. A chloroplast-targeting transit peptide spans 1-69 (MASISAATAT…THRHRRFTVR (69 aa)). The tr-type G domain occupies 79–283 (KPHVNIGTIG…AVDSYIPIPV (205 aa)). Residues 88-95 (GHVDHGKT) form a G1 region. Residue 88–95 (GHVDHGKT) participates in GTP binding. Residues 129 to 133 (GITIN) are G2. Positions 150 to 153 (DCPG) are G3. Residues 150 to 154 (DCPGH) and 205 to 208 (NKQD) contribute to the GTP site. The interval 205–208 (NKQD) is G4. The tract at residues 243–245 (SAL) is G5.

The protein belongs to the TRAFAC class translation factor GTPase superfamily. Classic translation factor GTPase family. EF-Tu/EF-1A subfamily.

The protein resides in the plastid. The protein localises to the chloroplast. Functionally, this protein promotes the GTP-dependent binding of aminoacyl-tRNA to the A-site of ribosomes during protein biosynthesis. The sequence is that of Elongation factor Tu, chloroplastic (TUFA) from Nicotiana tabacum (Common tobacco).